The chain runs to 121 residues: uncharacterized protein (121 aa).

Disordered regions lie at residues 24–43 (SGRTGGQRKGASLARPGRGG) and 100–121 (DHENSQNNSKRRCKVNCETDQR).

This is an uncharacterized protein from Homo sapiens (Human).